Reading from the N-terminus, the 310-residue chain is Homoserine kinase (310 aa).

P91–C101 is a binding site for ATP.

Belongs to the GHMP kinase family. Homoserine kinase subfamily.

The protein resides in the cytoplasm. The enzyme catalyses L-homoserine + ATP = O-phospho-L-homoserine + ADP + H(+). The protein operates within amino-acid biosynthesis; L-threonine biosynthesis; L-threonine from L-aspartate: step 4/5. Its function is as follows. Catalyzes the ATP-dependent phosphorylation of L-homoserine to L-homoserine phosphate. The protein is Homoserine kinase of Escherichia coli O6:K15:H31 (strain 536 / UPEC).